Here is a 353-residue protein sequence, read N- to C-terminus: Sorbitol dehydrogenase (353 aa).

C45 provides a ligand contact to Zn(2+). A substrate-binding site is contributed by Y51. Positions 70 and 71 each coordinate Zn(2+). E156 serves as a coordination point for substrate. NAD(+)-binding positions include V184, D204, R209, 271–273 (VGL), and 296–298 (IFR). R298 and Y299 together coordinate substrate.

It belongs to the zinc-containing alcohol dehydrogenase family. As to quaternary structure, homotetramer. Zn(2+) serves as cofactor.

The catalysed reaction is keto-D-fructose + NADH + H(+) = D-sorbitol + NAD(+). It carries out the reaction xylitol + NAD(+) = D-xylulose + NADH + H(+). The enzyme catalyses L-iditol + NAD(+) = keto-L-sorbose + NADH + H(+). Functionally, polyol dehydrogenase that catalyzes the NAD(+)-dependent oxidation of various sugar alcohols. Is mostly active with D-sorbitol (D-glucitol), xylitol and L-iditol as substrates, leading to the C2-oxidized products D-fructose, D-xylulose and L-sorbose, respectively. The sequence is that of Sorbitol dehydrogenase from Bacillus subtilis (strain 168).